The primary structure comprises 167 residues: Ubiquitin-fold modifier-conjugating enzyme 1 (167 aa).

The Glycyl thioester intermediate role is filled by Cys-116.

This sequence belongs to the ubiquitin-conjugating enzyme family. UFC1 subfamily. Interacts with UBA5 (via C-terminus). Interacts with UFL1. Interacts with UFM1.

In terms of biological role, E2-like enzyme which specifically catalyzes the second step in ufmylation. Accepts the ubiquitin-like modifier UFM1 from the E1 enzyme UBA5 and forms an intermediate with UFM1 via a thioester linkage. Ufmylation is involved in various processes, such as ribosome recycling, response to DNA damage, interferon response or reticulophagy (also called ER-phagy). This Esox lucius (Northern pike) protein is Ubiquitin-fold modifier-conjugating enzyme 1.